A 1252-amino-acid polypeptide reads, in one-letter code: DNA-directed RNA polymerase subunit beta (1252 aa).

Belongs to the RNA polymerase beta chain family. The RNAP catalytic core consists of 2 alpha, 1 beta, 1 beta' and 1 omega subunit. When a sigma factor is associated with the core the holoenzyme is formed, which can initiate transcription.

It carries out the reaction RNA(n) + a ribonucleoside 5'-triphosphate = RNA(n+1) + diphosphate. In terms of biological role, DNA-dependent RNA polymerase catalyzes the transcription of DNA into RNA using the four ribonucleoside triphosphates as substrates. This Chlamydia trachomatis serovar D (strain ATCC VR-885 / DSM 19411 / UW-3/Cx) protein is DNA-directed RNA polymerase subunit beta.